A 188-amino-acid polypeptide reads, in one-letter code: Elongation factor P (188 aa).

The residue at position 34 (Lys-34) is an N6-(3,6-diaminohexanoyl)-5-hydroxylysine.

The protein belongs to the elongation factor P family. In terms of processing, is beta-lysylated on the epsilon-amino group of Lys-34 by the combined action of EpmA and EpmB, and then hydroxylated on the C5 position of the same residue by EpmC. Lysylation is critical for the stimulatory effect of EF-P on peptide-bond formation. The lysylation moiety would extend toward the peptidyltransferase center and stabilize the terminal 3-CCA end of the tRNA. The hydroxylation of the C5 position on Lys-34 would allow additional potential stabilizing hydrogen-bond interactions with the P-tRNA.

It is found in the cytoplasm. Its pathway is protein biosynthesis; polypeptide chain elongation. Functionally, involved in peptide bond synthesis. Alleviates ribosome stalling that occurs when 3 or more consecutive Pro residues or the sequence PPG is present in a protein, possibly by augmenting the peptidyl transferase activity of the ribosome. Modification of Lys-34 is required for alleviation. The protein is Elongation factor P of Salmonella arizonae (strain ATCC BAA-731 / CDC346-86 / RSK2980).